We begin with the raw amino-acid sequence, 494 residues long: Serine/arginine-rich splicing factor 4 (494 aa).

The RRM 1 domain maps to 2–72; sequence PRVYIGRLSY…ERVIVEHARG (71 aa). Disordered regions lie at residues 72–95 and 169–494; these read GPRRDGSYGSGRSGYGYRRSGRDK and KIRL…HSRS. Phosphoserine is present on residues Ser78 and Ser84. The region spanning 104–177 is the RRM 2 domain; sequence YRLIVENLSS…RKIRLVEDKP (74 aa). 2 stretches are compositionally biased toward basic residues: residues 179–206 and 214–246; these read SRRRRSYSRSRSHSRSRSRSRHSRKSRS and SHSKSRSRSRSGSRSRSKSRSRSQSRSRSKKEK. The span at 247 to 256 shows a compositional bias: basic and acidic residues; sequence SRSPSKEKSR. A compositionally biased stretch (basic residues) spans 257–267; sequence SRSHSAGKSRS. Positions 268-278 are enriched in basic and acidic residues; that stretch reads KSKDQAEEKIQ. A compositionally biased stretch (basic residues) spans 286-302; sequence PKSRSPSRHKSKSKSRS. Ser288, Ser290, and Ser292 each carry phosphoserine. Over residues 303 to 327 the composition is skewed to basic and acidic residues; sequence RSQERRVEEEKRGSVSRGRSQEKSL. Basic residues-rich tracts occupy residues 328–359 and 367–382; these read RQSRSRSRSKGGSRSRSRSRSKSKDKRKGRKR and RSRSRSKSERSRKRGS. The span at 411 to 431 shows a compositional bias: basic and acidic residues; that stretch reads VSKEREHAKSESSQREGRGES. Ser431, Ser446, Ser456, Ser458, and Ser460 each carry phosphoserine. Positions 449–460 are enriched in low complexity; the sequence is KSKPNLPSESRS. The span at 461-494 shows a compositional bias: basic residues; it reads RSKSASKTRSRSKSRSRSASRSPSRSRSRSHSRS.

This sequence belongs to the splicing factor SR family. In terms of assembly, found in a pre-mRNA splicing complex with SRSF4/SFRS4, SRSF5/SFRS5, SNRNP70, SNRPA1, SRRM1 and SRRM2. Interacts with PNN. In terms of processing, extensively phosphorylated on serine residues in the RS domain.

The protein resides in the nucleus speckle. In terms of biological role, plays a role in alternative splice site selection during pre-mRNA splicing. Represses the splicing of MAPT/Tau exon 10. In Homo sapiens (Human), this protein is Serine/arginine-rich splicing factor 4 (SRSF4).